The following is a 113-amino-acid chain: U11-theraphotoxin-Hhn1a (113 aa).

Positions 1 to 21 (MNTVRVTFLLVFVLAVSLGQA) are cleaved as a signal peptide. The propeptide occupies 22-74 (DKDENRMEMQEKTEQGKSYLDFAENLLLQKLEELEAKPLEEDSEESRNSRQKR). A compositionally biased stretch (basic and acidic residues) spans 57–69 (AKPLEEDSEESRN). Residues 57–83 (AKPLEEDSEESRNSRQKRCIGEGVPCD) form a disordered region. Disulfide bonds link C75–C90, C82–C95, and C89–C110.

It belongs to the neurotoxin 14 (magi-1) family. 01 (HNTX-16) subfamily. As to expression, expressed by the venom gland.

It localises to the secreted. In terms of biological role, probable ion channel inhibitor. The sequence is that of U11-theraphotoxin-Hhn1a from Cyriopagopus hainanus (Chinese bird spider).